The following is a 186-amino-acid chain: Ribosome-recycling factor (186 aa).

This sequence belongs to the RRF family.

Its subcellular location is the cytoplasm. Its function is as follows. Responsible for the release of ribosomes from messenger RNA at the termination of protein biosynthesis. May increase the efficiency of translation by recycling ribosomes from one round of translation to another. This chain is Ribosome-recycling factor, found in Rhodopseudomonas palustris (strain ATCC BAA-98 / CGA009).